The chain runs to 87 residues: Small ribosomal subunit protein uS15 (87 aa).

This sequence belongs to the universal ribosomal protein uS15 family. Part of the 30S ribosomal subunit. Forms a bridge to the 50S subunit in the 70S ribosome, contacting the 23S rRNA.

One of the primary rRNA binding proteins, it binds directly to 16S rRNA where it helps nucleate assembly of the platform of the 30S subunit by binding and bridging several RNA helices of the 16S rRNA. Its function is as follows. Forms an intersubunit bridge (bridge B4) with the 23S rRNA of the 50S subunit in the ribosome. The chain is Small ribosomal subunit protein uS15 from Clostridium acetobutylicum (strain ATCC 824 / DSM 792 / JCM 1419 / IAM 19013 / LMG 5710 / NBRC 13948 / NRRL B-527 / VKM B-1787 / 2291 / W).